The sequence spans 234 residues: tRNA (guanine-N(1)-)-methyltransferase (234 aa).

S-adenosyl-L-methionine contacts are provided by residues Gly-115 and 135-140; that span reads VGDYIL.

It belongs to the RNA methyltransferase TrmD family. Homodimer.

It is found in the cytoplasm. The enzyme catalyses guanosine(37) in tRNA + S-adenosyl-L-methionine = N(1)-methylguanosine(37) in tRNA + S-adenosyl-L-homocysteine + H(+). Its function is as follows. Specifically methylates guanosine-37 in various tRNAs. The polypeptide is tRNA (guanine-N(1)-)-methyltransferase (Rickettsia peacockii (strain Rustic)).